The sequence spans 356 residues: Histidinol-phosphate aminotransferase (356 aa).

Lys213 bears the N6-(pyridoxal phosphate)lysine mark.

It belongs to the class-II pyridoxal-phosphate-dependent aminotransferase family. Histidinol-phosphate aminotransferase subfamily. In terms of assembly, homodimer. Pyridoxal 5'-phosphate is required as a cofactor.

The catalysed reaction is L-histidinol phosphate + 2-oxoglutarate = 3-(imidazol-4-yl)-2-oxopropyl phosphate + L-glutamate. It functions in the pathway amino-acid biosynthesis; L-histidine biosynthesis; L-histidine from 5-phospho-alpha-D-ribose 1-diphosphate: step 7/9. This chain is Histidinol-phosphate aminotransferase, found in Clostridium novyi (strain NT).